Reading from the N-terminus, the 55-residue chain is MAKAATIKIKLLSTADTGFFYVTKKNSRTMTDKMSKRKYDPIVKKHVEFKETKIK.

It belongs to the bacterial ribosomal protein bL33 family.

The polypeptide is Large ribosomal subunit protein bL33 (Bartonella bacilliformis (strain ATCC 35685 / KC583 / Herrer 020/F12,63)).